A 338-amino-acid polypeptide reads, in one-letter code: Terpene synthase 1 (338 aa).

The DDxx(x)D/E motif motif lies at 80–85; it reads DDALDS. The NDxxSxxxD/E motif signature appears at 220–228; that stretch reads NDLVSYEKE.

It belongs to the terpene synthase family.

It carries out the reaction (2E,6E)-farnesyl diphosphate = (2S,3R,6S,9S)-(-)-protoillud-7-ene + diphosphate. In terms of biological role, terpene synthase that converts its substrate farnesyl diphosphate (FPP) into the sesquiterpene protoillud-7-ene. The chain is Terpene synthase 1 from Cavenderia fasciculata (Slime mold).